We begin with the raw amino-acid sequence, 540 residues long: CTP synthase (540 aa).

Residues methionine 1 to leucine 266 are amidoligase domain. Position 14 (serine 14) interacts with CTP. Residue serine 14 coordinates UTP. Residues serine 15–isoleucine 20 and aspartate 72 each bind ATP. Aspartate 72 and glutamate 140 together coordinate Mg(2+). CTP-binding positions include aspartate 147–glutamate 149, lysine 187–glutamine 192, and lysine 223. UTP contacts are provided by residues lysine 187–glutamine 192 and lysine 223. The 250-residue stretch at threonine 291–threonine 540 folds into the Glutamine amidotransferase type-1 domain. Glycine 351 serves as a coordination point for L-glutamine. Cysteine 378 (nucleophile; for glutamine hydrolysis) is an active-site residue. L-glutamine contacts are provided by residues leucine 379–glutamine 382, glutamate 402, and arginine 470. Residues histidine 513 and glutamate 515 contribute to the active site.

Belongs to the CTP synthase family. Homotetramer.

The enzyme catalyses UTP + L-glutamine + ATP + H2O = CTP + L-glutamate + ADP + phosphate + 2 H(+). It catalyses the reaction L-glutamine + H2O = L-glutamate + NH4(+). It carries out the reaction UTP + NH4(+) + ATP = CTP + ADP + phosphate + 2 H(+). The protein operates within pyrimidine metabolism; CTP biosynthesis via de novo pathway; CTP from UDP: step 2/2. Its activity is regulated as follows. Allosterically activated by GTP, when glutamine is the substrate; GTP has no effect on the reaction when ammonia is the substrate. The allosteric effector GTP functions by stabilizing the protein conformation that binds the tetrahedral intermediate(s) formed during glutamine hydrolysis. Inhibited by the product CTP, via allosteric rather than competitive inhibition. Its function is as follows. Catalyzes the ATP-dependent amination of UTP to CTP with either L-glutamine or ammonia as the source of nitrogen. Regulates intracellular CTP levels through interactions with the four ribonucleotide triphosphates. The polypeptide is CTP synthase (Helicobacter hepaticus (strain ATCC 51449 / 3B1)).